The sequence spans 415 residues: Phosphoglycerate kinase (415 aa).

(2R)-3-phosphoglycerate-binding residues include valine 22, aspartate 23, phenylalanine 24, asparagine 25, glutamine 37, arginine 38, serine 61, histidine 62, glycine 64, arginine 65, arginine 121, histidine 168, and arginine 169. An ADP-binding site is contributed by glycine 212. Glycine 212 serves as a coordination point for CDP. AMP is bound by residues alanine 213 and lysine 214. Residue alanine 213 participates in ATP binding. Position 213 (alanine 213) interacts with Mg(2+). Residues alanine 216 and aspartate 217 each contribute to the Mg(2+) site. Aspartate 217 contributes to the CDP binding site. Lysine 218 provides a ligand contact to AMP. ATP is bound at residue lysine 218. Glycine 236 provides a ligand contact to ADP. Position 236 (glycine 236) interacts with CDP. AMP is bound by residues glycine 237 and glycine 311. Residues glycine 237 and glycine 311 each coordinate ATP. Residues glycine 336 and phenylalanine 341 each contribute to the CDP site. Phenylalanine 341 contributes to the ADP binding site. Glutamate 342 contributes to the AMP binding site. Residues glutamate 342, aspartate 373, and threonine 374 each contribute to the ATP site. Aspartate 373 is a Mg(2+) binding site.

Belongs to the phosphoglycerate kinase family. Monomer. Mg(2+) is required as a cofactor.

It localises to the cytoplasm. The enzyme catalyses (2R)-3-phosphoglycerate + ATP = (2R)-3-phospho-glyceroyl phosphate + ADP. It participates in carbohydrate degradation; glycolysis; pyruvate from D-glyceraldehyde 3-phosphate: step 2/5. Its function is as follows. Enzyme of the glycolytic pathway. Glycolysis is essential in glial cells but not in neurons; neurons rely on the citric acid cycle for their energy needs, and on lactate and alanine secreted into the hemolymph by glial cells to fuel it. This Drosophila melanogaster (Fruit fly) protein is Phosphoglycerate kinase.